Here is a 519-residue protein sequence, read N- to C-terminus: MSKFHKTISRRDFMKGLGLAGAGIGAVAASAPVFHDIDELVSSEANSTKDQPWYVKHREHFDPTITVDWDIFDRYDGYQHKGVYEGPPDAPFTSWGNRLQVRMSGEEQKKRILAAKKERFPGWDGGLHGRGDQRADALFYAVTQPFPGSGEEGHGLFQPYPDQPGKFYARWGLYGPPHDSAPPDGSVPKWEGTPEDNFLMLRAAAKYFGAGGVGALNLADPKCKKLIYKKAQPMTLGKGTYSEIGGPGMIDAKIYPKVPDHAVPINFKEADYSYYNDAEWVIPTKCESIFTFTLPQPQELNKRTGGIAGAGSYTVYKDFARVGTLVQMFIKYLGYHALYWPIGWGPGGCFTTFDGQGEQGRTGAAIHWKFGSSQRGSERVITDLPIAPTPPIDAGMFEFCKTCYICRDVCVSGGVHQEDEPTWDSGNWWNVQGYLGYRTDWSGCHNQCGMCQSSCPFTYLGLENASLVHKIVKGVVANTTVFNSFFTNMEKALGYGDLTMENSNWWKEEGPIYGFDPGT.

Residues 1 to 43 (MSKFHKTISRRDFMKGLGLAGAGIGAVAASAPVFHDIDELVSS) constitute a signal peptide (tat-type signal). 2 consecutive 4Fe-4S ferredoxin-type domains span residues 388–420 (PTPP…QEDE) and 435–465 (LGYR…LENA). The [4Fe-4S] cluster site is built by Cys400, Cys403, Cys406, Cys410, Cys444, Cys448, Cys451, and Cys455.

The protein belongs to the PceA family. Requires [4Fe-4S] cluster as cofactor. It depends on corrinoid as a cofactor. In terms of processing, predicted to be exported by the Tat system. The position of the signal peptide cleavage has been experimentally proven.

It is found in the cell membrane. The catalysed reaction is chloroethene + AH2 = ethene + chloride + A + H(+). It catalyses the reaction (Z)-1,2-dichloroethene + AH2 = chloroethene + chloride + A + H(+). It carries out the reaction 1,1-dichloroethene + AH2 = chloroethene + chloride + A + H(+). In terms of biological role, catalyzes the reductive dechlorination of chloroethene (or vinyl chloride, VC) to ethene. Can also reduce all dichloroethene (DCE) isomers, but not tetrachloroethene (PCE) or trichloroethene (TCE), at high rates. Reduced methyl viologen can act as the artificial electron donor. This chain is Chloroethene reductive dehalogenase, found in Dehalococcoides mccartyi (strain VS).